We begin with the raw amino-acid sequence, 603 residues long: Phosphomethylpyrimidine synthase (603 aa).

Substrate is bound by residues N224, M253, Y282, H318, 338 to 340 (SRG), 379 to 382 (DGLR), and E418. Residue H422 participates in Zn(2+) binding. Y445 is a binding site for substrate. H486 is a Zn(2+) binding site. Positions 566, 569, and 574 each coordinate [4Fe-4S] cluster.

It belongs to the ThiC family. In terms of assembly, homodimer. [4Fe-4S] cluster serves as cofactor.

It catalyses the reaction 5-amino-1-(5-phospho-beta-D-ribosyl)imidazole + S-adenosyl-L-methionine = 4-amino-2-methyl-5-(phosphooxymethyl)pyrimidine + CO + 5'-deoxyadenosine + formate + L-methionine + 3 H(+). It participates in cofactor biosynthesis; thiamine diphosphate biosynthesis. In terms of biological role, catalyzes the synthesis of the hydroxymethylpyrimidine phosphate (HMP-P) moiety of thiamine from aminoimidazole ribotide (AIR) in a radical S-adenosyl-L-methionine (SAM)-dependent reaction. This chain is Phosphomethylpyrimidine synthase, found in Xylella fastidiosa (strain Temecula1 / ATCC 700964).